Consider the following 128-residue polypeptide: Large ribosomal subunit protein bL12 (128 aa).

Belongs to the bacterial ribosomal protein bL12 family. As to quaternary structure, homodimer. Part of the ribosomal stalk of the 50S ribosomal subunit. Forms a multimeric L10(L12)X complex, where L10 forms an elongated spine to which 2 to 4 L12 dimers bind in a sequential fashion. Binds GTP-bound translation factors.

Functionally, forms part of the ribosomal stalk which helps the ribosome interact with GTP-bound translation factors. Is thus essential for accurate translation. The chain is Large ribosomal subunit protein bL12 from Corynebacterium glutamicum (strain R).